A 987-amino-acid chain; its full sequence is Valine--tRNA ligase (987 aa).

A 'HIGH' region motif is present at residues 45–55 (PNVTGSLHMGH). A 'KMSKS' region motif is present at residues 634–638 (KMSKS). Lys637 contacts ATP. Residues 917–985 (VIDIGAEKAR…LSAALARLSE (69 aa)) are a coiled coil.

Belongs to the class-I aminoacyl-tRNA synthetase family. ValS type 1 subfamily. As to quaternary structure, monomer.

It is found in the cytoplasm. The catalysed reaction is tRNA(Val) + L-valine + ATP = L-valyl-tRNA(Val) + AMP + diphosphate. In terms of biological role, catalyzes the attachment of valine to tRNA(Val). As ValRS can inadvertently accommodate and process structurally similar amino acids such as threonine, to avoid such errors, it has a 'posttransfer' editing activity that hydrolyzes mischarged Thr-tRNA(Val) in a tRNA-dependent manner. The protein is Valine--tRNA ligase of Cereibacter sphaeroides (strain ATCC 17023 / DSM 158 / JCM 6121 / CCUG 31486 / LMG 2827 / NBRC 12203 / NCIMB 8253 / ATH 2.4.1.) (Rhodobacter sphaeroides).